An 836-amino-acid polypeptide reads, in one-letter code: ATP-binding cassette sub-family B member 6 (836 aa).

The Lumenal portion of the chain corresponds to 1–26 (MVTVGNYCEAEGPAGPAWTQNGLSPC). Residues 1–205 (MVTVGNYCEA…SGGLFILGLW (205 aa)) form a required for the lysosomal targeting region. The required for ATPase activity stretch occupies residues 1–236 (MVTVGNYCEA…RNQGRSTDPR (236 aa)). An intrachain disulfide couples Cys8 to Cys26. Residues 27–47 (FFYTLVPSTLMTLGVLALVLV) form a helical membrane-spanning segment. At 48–72 (LPCRRREVPAGTEELSWAAGPRVAP) the chain is on the cytoplasmic side. The helical transmembrane segment at 73–93 (YALQLSLAILQMALPLASLAG) threads the bilayer. The Lumenal portion of the chain corresponds to 94–106 (RVGTARGVRLPGY). The helical transmembrane segment at 107–127 (LLLASVLESLASACGLWLLVV) threads the bilayer. At 128-147 (ERSQARQSLAMGVWMKFRHS) the chain is on the cytoplasmic side. A helical transmembrane segment spans residues 148-168 (LGLLLLWTVTFAAENLVLVSW). The Lumenal portion of the chain corresponds to 169-185 (NSPQWWWSRADLGQQVQ). A helical membrane pass occupies residues 186 to 206 (FGLWVLRYMTSGGLFILGLWA). Over 207–264 (PGLRPQSYTLHVNEEDQDGGRNQGRSTDPRSTWRDLGRKLRLLSGYLWPRGSPSLQLT) the chain is Cytoplasmic. Residues 265 to 285 (VLLCMGLMGLDRALNVLVPIF) traverse the membrane as a helical segment. Residues 265-556 (VLLCMGLMGL…FGTYYRMIQT (292 aa)) enclose the ABC transmembrane type-1 domain. Residues 286-305 (YRDIVNLLTSKAPWSSLAWT) lie on the Lumenal side of the membrane. A helical membrane pass occupies residues 306–326 (VTTYVFLKFLQGGGTGSTGFV). At 327–375 (SNLRTFLWIRVQQFTSRGVELRLFSHLHELSLRWHLGRRTGEVLRIVDR) the chain is on the cytoplasmic side. A helical membrane pass occupies residues 376-396 (GTSSVTGLLSYLVFNIIPTLA). Position 397 (Asp397) is a topological domain, lumenal. Residues 398-418 (IIIGIIYFSMFFNAWFGLIVF) traverse the membrane as a helical segment. At 419 to 499 (LCMSLYLILT…STASLVLLNQ (81 aa)) the chain is on the cytoplasmic side. The chain crosses the membrane as a helical span at residues 500–520 (TQNMVIGFGLLAGSLLCAYFV). Topologically, residues 521 to 529 (SERRLQVGD) are lumenal. A helical transmembrane segment spans residues 530-550 (FVLFGTYITQLYMPLNWFGTY). Residues 551–836 (YRMIQTNFID…QGQETVPEDS (286 aa)) are Cytoplasmic-facing. Residues 590–824 (VEFENVHFSY…GGVYAEMWQL (235 aa)) form the ABC transporter domain. Residues Tyr599 and 623–634 (GPSGAGKSTILR) contribute to the ATP site.

It belongs to the ABC transporter superfamily. ABCB family. Heavy Metal importer (TC 3.A.1.210) subfamily. Homodimer. Post-translationally, N-glycosylated. In terms of tissue distribution, ubiquitously expressed. Highly expressed in testis by meiotic pachytene spermatocytes and post-meiotic early spermatids.

The protein resides in the cell membrane. The protein localises to the mitochondrion outer membrane. It is found in the endoplasmic reticulum membrane. It localises to the golgi apparatus membrane. Its subcellular location is the endosome membrane. The protein resides in the lysosome membrane. The protein localises to the late endosome membrane. It is found in the early endosome membrane. It localises to the secreted. Its subcellular location is the extracellular exosome. The protein resides in the mitochondrion. The protein localises to the endosome. It is found in the multivesicular body membrane. It localises to the melanosome membrane. The enzyme catalyses heme b(in) + ATP + H2O = heme b(out) + ADP + phosphate + H(+). It carries out the reaction coproporphyrin III(in) + ATP + H2O = coproporphyrin III(out) + ADP + phosphate + H(+). The catalysed reaction is pheophorbide a(in) + ATP + H2O = pheophorbide a(out) + ADP + phosphate + H(+). It catalyses the reaction coproporphyrinogen III(in) + ATP + H2O = coproporphyrinogen III(out) + ADP + phosphate + H(+). The enzyme catalyses protoporphyrin IX(in) + ATP + H2O = protoporphyrin IX(out) + ADP + phosphate + H(+). It carries out the reaction coproporphyrin I(in) + ATP + H2O = coproporphyrin I(out) + ADP + phosphate + H(+). The catalysed reaction is uroporphyrin I(in) + ATP + H2O = uroporphyrin I(out) + ADP + phosphate + H(+). It catalyses the reaction uroporphyrin III(in) + ATP + H2O = uroporphyrin III(out) + ADP + phosphate + H(+). Functionally, ATP-dependent transporter that catalyzes the transport of a broad-spectrum of porphyrins from the cytoplasm to the extracellular space through the plasma membrane or into the vesicle lumen. May also function as an ATP-dependent importer of porphyrins from the cytoplasm into the mitochondria, in turn may participate in the de novo heme biosynthesis regulation and in the coordination of heme and iron homeostasis during phenylhydrazine stress. May play a key role in the early steps of melanogenesis producing PMEL amyloid fibrils. In vitro, it confers to cells a resistance to toxic metal such as arsenic and cadmium and against chemotherapeutics agent such as 5-fluorouracil, SN-38 and vincristin. In addition may play a role in the transition metal homeostasis. The polypeptide is ATP-binding cassette sub-family B member 6 (Rattus norvegicus (Rat)).